The following is a 793-amino-acid chain: MVIQTATTLSPAKARPSFPHNDLIKSMSDSLISRPTHPPIRKLKSSLKISHPEPISRSKSEIFCTSPEKNVRFAIELTTVKRFDKNAEPSSISNENSPTLSPVDSNTAADDVQLFNNEDCWFNDSSLVTNLLKNEKKFRYMNSLNNMFKLDLYDSEDEDDIDEHINSQAEYGYTYNSLSTRGKTSENKSATSSLATQATNICDWKLHCTDLVPFKIAPPLFTKTLSASDLQGQLTKYLNGQNVKLHSLTQLGDDSSKITGLVYVKNLSFEKYLEIKFTFNSWRDIHYVTANFNRTINSNVDEFKFTIDLNSLKYILLIKRIITMEKNTSSCPLNIELCCRYDVNNETYYDNNNGKNYHLFMTTFKKGGETKEKIPVVVEPASQTDAAMSPKEMKARFVSSNPTLSRFLPQSRKFSEDTDYYNTSPLKHLYHNDTTSWVKPKRLNVVLDKLENATPPPPSSALANDTARTGKITKDKNNVLAPPTASNSIDLPILGSQHQSLYSGSSSYSSSSSSISSSLSFASSNNSSTNSSSASCSFPLTELDNFDYANLYEPNDTFTTANLFNHSLNSLMPEISTPSFFGGFRNENTINNNDSKNLVTSLEDSYEDKQSVITDTTMDENNKTSTINNSTDTLIKPSKENGTVKENKSSANSTSAPSSSQNRASTILNDHSNGKSDLKYVNYQSLLDSHCFYNHPSSPNLQSTSFSSAAPFSGISQASDIFDYENEDSDSNQIAGEIDNNSFPPHFYLDEDDKSACLSDDALIDHHRNTNPFINTFSSSPPILSQEVDRWRL.

Positions 1–10 are enriched in polar residues; the sequence is MVIQTATTLS. The disordered stretch occupies residues 1 to 20; sequence MVIQTATTLSPAKARPSFPH. The region spanning 235–360 is the CBM21 domain; the sequence is TKYLNGQNVK…NNNGKNYHLF (126 aa). Ser-415 and Ser-424 each carry phosphoserine. Disordered regions lie at residues 450-491 and 616-671; these read LENA…SIDL and TTMD…LNDH. Over residues 623-633 the composition is skewed to polar residues; that stretch reads KTSTINNSTDT. Positions 637–648 are enriched in basic and acidic residues; it reads PSKENGTVKENK. Residues 649–665 show a composition bias toward low complexity; the sequence is SSANSTSAPSSSQNRAS.

Its function is as follows. Regulates the activity of glycogen synthase. It is most probably a regulatory subunit for protein phosphatase type 1. The chain is Serine/threonine-protein phosphatase 1 regulatory subunit GAC1 (GAC1) from Saccharomyces cerevisiae (strain ATCC 204508 / S288c) (Baker's yeast).